We begin with the raw amino-acid sequence, 306 residues long: uncharacterized protein (306 aa).

The stretch at 13–39 (NMLNEIAANNNLLNNKNNQTNQLNNNQ) forms a coiled coil. 3 disordered regions span residues 44–76 (YNNQ…HQQN), 103–204 (DSKE…QSGQ), and 216–249 (QKQL…TMQH). Positions 119-201 (HQQPIQNNPS…QFAQPNQYNQ (83 aa)) are enriched in low complexity. Residues 218–235 (QLDKNQPEKIPSKPEKNQ) show a composition bias toward basic and acidic residues. A helical transmembrane segment spans residues 279-299 (LFDYIIIPIALVLVFLFLVHP).

It localises to the membrane. This is an uncharacterized protein from Acanthamoeba polyphaga mimivirus (APMV).